The sequence spans 238 residues: Thiamine import ATP-binding protein ThiQ (238 aa).

Residues 2–230 (LALDKVRYEY…HPHPELAQFV (229 aa)) form the ABC transporter domain. 32-39 (GPSGAGKS) lines the ATP pocket.

The protein belongs to the ABC transporter superfamily. Thiamine importer (TC 3.A.1.19.1) family. The complex is composed of two ATP-binding proteins (ThiQ), two transmembrane proteins (ThiP) and a solute-binding protein (ThiB).

It localises to the cell inner membrane. The enzyme catalyses thiamine(out) + ATP + H2O = thiamine(in) + ADP + phosphate + H(+). Part of the ABC transporter complex ThiBPQ involved in thiamine import. Responsible for energy coupling to the transport system. This Vibrio cholerae serotype O1 (strain ATCC 39315 / El Tor Inaba N16961) protein is Thiamine import ATP-binding protein ThiQ.